The sequence spans 484 residues: Probable cytosol aminopeptidase (484 aa).

Mn(2+)-binding residues include Lys256 and Asp261. Residue Lys268 is part of the active site. The Mn(2+) site is built by Asp279, Asp338, and Glu340. Arg342 is an active-site residue.

It belongs to the peptidase M17 family. Requires Mn(2+) as cofactor.

It localises to the cytoplasm. The catalysed reaction is Release of an N-terminal amino acid, Xaa-|-Yaa-, in which Xaa is preferably Leu, but may be other amino acids including Pro although not Arg or Lys, and Yaa may be Pro. Amino acid amides and methyl esters are also readily hydrolyzed, but rates on arylamides are exceedingly low.. It catalyses the reaction Release of an N-terminal amino acid, preferentially leucine, but not glutamic or aspartic acids.. Presumably involved in the processing and regular turnover of intracellular proteins. Catalyzes the removal of unsubstituted N-terminal amino acids from various peptides. The chain is Probable cytosol aminopeptidase from Actinobacillus succinogenes (strain ATCC 55618 / DSM 22257 / CCUG 43843 / 130Z).